Consider the following 330-residue polypeptide: DNA-directed RNA polymerase subunit alpha (330 aa).

Residues 1–235 form an alpha N-terminal domain (alpha-NTD) region; it reads MQGSVTEFLK…EQLEAFVDLR (235 aa). The tract at residues 249–330 is alpha C-terminal domain (alpha-CTD); it reads FDPILLRPVD…WPPASIADNE (82 aa).

The protein belongs to the RNA polymerase alpha chain family. As to quaternary structure, homodimer. The RNAP catalytic core consists of 2 alpha, 1 beta, 1 beta' and 1 omega subunit. When a sigma factor is associated with the core the holoenzyme is formed, which can initiate transcription.

The enzyme catalyses RNA(n) + a ribonucleoside 5'-triphosphate = RNA(n+1) + diphosphate. Its function is as follows. DNA-dependent RNA polymerase catalyzes the transcription of DNA into RNA using the four ribonucleoside triphosphates as substrates. In Yersinia enterocolitica serotype O:8 / biotype 1B (strain NCTC 13174 / 8081), this protein is DNA-directed RNA polymerase subunit alpha.